A 57-amino-acid polypeptide reads, in one-letter code: Small ribosomal subunit protein bS21 (57 aa).

The segment at 35-57 is disordered; the sequence is REFYEKPSVRRKKKSEAARKRKY. A compositionally biased stretch (basic residues) spans 43 to 57; the sequence is VRRKKKSEAARKRKY.

It belongs to the bacterial ribosomal protein bS21 family.

This Bacillus licheniformis (strain ATCC 14580 / DSM 13 / JCM 2505 / CCUG 7422 / NBRC 12200 / NCIMB 9375 / NCTC 10341 / NRRL NRS-1264 / Gibson 46) protein is Small ribosomal subunit protein bS21.